Consider the following 1605-residue polypeptide: Zinc finger protein jing homolog (1605 aa).

Polar residues predominate over residues 1–15 (MQHQSLSVRNSSGIS). Disordered regions lie at residues 1–28 (MQHQ…VRSS), 60–117 (QWPW…QQSN), 359–388 (TRKV…TSDP), 441–468 (QQHQ…TQAQ), 856–877 (STTS…PPKL), 917–947 (TKAT…ASCT), and 991–1213 (NDSG…TDFL). Residues 64-117 (NTSNNTNATNSNNVQSNNNSSTATSNSSTNSNNSPAVNTPTTQNQSQPTTQQSN) show a composition bias toward low complexity. Residues 991-1000 (NDSGIVANSS) show a composition bias toward polar residues. Over residues 1021-1030 (PQKKDEESRQ) the composition is skewed to basic and acidic residues. The segment covering 1035–1049 (SPVPSPSPLSEPPVI) has biased composition (pro residues). Composition is skewed to acidic residues over residues 1053 to 1090 (SEPE…DEPH) and 1099 to 1110 (SSEAVELPELED). Over residues 1112 to 1126 (QPSPPLPCELPPPPT) the composition is skewed to pro residues. Over residues 1135-1149 (LSLPPSQKSPKSLLL) the composition is skewed to low complexity. Polar residues predominate over residues 1165-1201 (QESMSSDQDYSNQSPLDESSPTGSAEPSESQRSTTPV). The C2H2-type 1 zinc-finger motif lies at 1260–1285 (GVCYWSNCDAQFDTSSKLLDHLQIQH). The C2H2-type 2; degenerate zinc finger occupies 1293-1320 (FACLWDGCKVHNKESCSRRWLERHVLSH). Residues 1326-1350 (HKCIVAGCGMRFGSQLALEKHVNHH) form a C2H2-type 3 zinc finger. Disordered stretches follow at residues 1352 to 1371 (NNTD…LPKV) and 1511 to 1605 (CSRS…SSTS). 2 stretches are compositionally biased toward low complexity: residues 1511–1537 (CSRS…SLIS) and 1556–1605 (KQSY…SSTS).

Belongs to the AEBP2/jing C2H2-type zinc-finger family.

It is found in the nucleus. Functionally, may functionally interact with Polycomb group (PcG) and trithorax group (trxG) proteins to repress transcription. This is Zinc finger protein jing homolog from Aedes aegypti (Yellowfever mosquito).